A 206-amino-acid chain; its full sequence is Platelet glycoprotein Ib beta chain (206 aa).

Residues 1–25 (MGSGPRGALSLLLLLLAPPSRPAAG) form the signal peptide. Cystine bridges form between C26–C32 and C30–C39. Residues 27 to 55 (PAPCSCAGTLVDCGRRGLTWASLPTAFPV) enclose the LRRNT domain. Over 27–147 (PAPCSCAGTL…RAACAPGPLC (121 aa)) the chain is Extracellular. One copy of the LRR repeat lies at 60-83 (LVLTGNNLTALPPGLLDALPALRT). A glycan (N-linked (GlcNAc...) asparagine) is linked at N66. The LRRCT domain occupies 89-143 (NPWRCDCRLVPLRAWLAGRPERAPYRDLRCVAPPALRGRLLPYLAEDELRAACAP). 2 disulfides stabilise this stretch: C93-C118 and C95-C141. A helical transmembrane segment spans residues 148 to 172 (WGALAAQLALLGLGLLHALLLVLLL). Residues 173–206 (CRLRRLRARARARAAARLSLTDPLVAERAGTDES) are Cytoplasmic-facing. S191 is subject to Phosphoserine; by PKA. At T193 the chain carries Phosphothreonine.

In terms of assembly, two GP-Ib beta are disulfide-linked to one GP-Ib alpha. GP-IX is complexed with the GP-Ib heterodimer via a non covalent linkage. Interacts with TRAF4. As to expression, expressed in heart and brain.

It is found in the membrane. In terms of biological role, gp-Ib, a surface membrane protein of platelets, participates in the formation of platelet plugs by binding to von Willebrand factor, which is already bound to the subendothelium. This Homo sapiens (Human) protein is Platelet glycoprotein Ib beta chain (GP1BB).